The primary structure comprises 349 residues: DNA replication and repair protein RecF (349 aa).

29 to 36 (GLNGVGKT) is a binding site for ATP.

This sequence belongs to the RecF family.

Its subcellular location is the cytoplasm. The RecF protein is involved in DNA metabolism; it is required for DNA replication and normal SOS inducibility. RecF binds preferentially to single-stranded, linear DNA. It also seems to bind ATP. The protein is DNA replication and repair protein RecF of Acholeplasma laidlawii (strain PG-8A).